Reading from the N-terminus, the 410-residue chain is Arginine deiminase (410 aa).

C399 (amidino-cysteine intermediate) is an active-site residue.

The protein belongs to the arginine deiminase family.

It is found in the cytoplasm. The enzyme catalyses L-arginine + H2O = L-citrulline + NH4(+). It participates in amino-acid degradation; L-arginine degradation via ADI pathway; carbamoyl phosphate from L-arginine: step 1/2. This Listeria monocytogenes serotype 4b (strain F2365) protein is Arginine deiminase.